Here is a 250-residue protein sequence, read N- to C-terminus: 5-oxoprolinase subunit A (250 aa).

It belongs to the LamB/PxpA family. Forms a complex composed of PxpA, PxpB and PxpC.

It catalyses the reaction 5-oxo-L-proline + ATP + 2 H2O = L-glutamate + ADP + phosphate + H(+). Its function is as follows. Catalyzes the cleavage of 5-oxoproline to form L-glutamate coupled to the hydrolysis of ATP to ADP and inorganic phosphate. In Paraburkholderia xenovorans (strain LB400), this protein is 5-oxoprolinase subunit A.